The chain runs to 421 residues: Histidine--tRNA ligase (421 aa).

This sequence belongs to the class-II aminoacyl-tRNA synthetase family. Homodimer.

It is found in the cytoplasm. The catalysed reaction is tRNA(His) + L-histidine + ATP = L-histidyl-tRNA(His) + AMP + diphosphate + H(+). In Thermus thermophilus (strain ATCC BAA-163 / DSM 7039 / HB27), this protein is Histidine--tRNA ligase.